The following is a 222-amino-acid chain: UPF0758 protein YicR (222 aa).

Positions 100–222 (PLLSPEMTRE…YVSFAERGWI (123 aa)) constitute an MPN domain. 3 residues coordinate Zn(2+): His171, His173, and Asp184. Positions 171–184 (HNHPSGCAEPSKAD) match the JAMM motif motif.

The protein belongs to the UPF0758 family. YicR subfamily.

This is UPF0758 protein YicR from Escherichia coli O81 (strain ED1a).